A 241-amino-acid chain; its full sequence is Octanoyltransferase (241 aa).

A BPL/LPL catalytic domain is found at 43–228; sequence AETPDEIWLV…CLTANLDGSP (186 aa). Residues 83-90, 159-161, and 172-174 each bind substrate; these read RGGQITYH, ALG, and GVS. The active-site Acyl-thioester intermediate is Cys190.

Belongs to the LipB family.

Its subcellular location is the cytoplasm. The catalysed reaction is octanoyl-[ACP] + L-lysyl-[protein] = N(6)-octanoyl-L-lysyl-[protein] + holo-[ACP] + H(+). The protein operates within protein modification; protein lipoylation via endogenous pathway; protein N(6)-(lipoyl)lysine from octanoyl-[acyl-carrier-protein]: step 1/2. In terms of biological role, catalyzes the transfer of endogenously produced octanoic acid from octanoyl-acyl-carrier-protein onto the lipoyl domains of lipoate-dependent enzymes. Lipoyl-ACP can also act as a substrate although octanoyl-ACP is likely to be the physiological substrate. The polypeptide is Octanoyltransferase (Paraburkholderia xenovorans (strain LB400)).